The following is a 206-amino-acid chain: Probable GTP-binding protein EngB (206 aa).

The region spanning Ser-25–Pro-198 is the EngB-type G domain. Mg(2+)-binding residues include Ser-40 and Thr-62.

It belongs to the TRAFAC class TrmE-Era-EngA-EngB-Septin-like GTPase superfamily. EngB GTPase family. Mg(2+) is required as a cofactor.

In terms of biological role, necessary for normal cell division and for the maintenance of normal septation. The polypeptide is Probable GTP-binding protein EngB (Thiobacillus denitrificans (strain ATCC 25259 / T1)).